A 171-amino-acid chain; its full sequence is 3-hydroxydecanoyl-[acyl-carrier-protein] dehydratase (171 aa).

His70 is an active-site residue.

Belongs to the thioester dehydratase family. FabA subfamily. As to quaternary structure, homodimer.

Its subcellular location is the cytoplasm. The catalysed reaction is a (3R)-hydroxyacyl-[ACP] = a (2E)-enoyl-[ACP] + H2O. It carries out the reaction (3R)-hydroxydecanoyl-[ACP] = (2E)-decenoyl-[ACP] + H2O. It catalyses the reaction (2E)-decenoyl-[ACP] = (3Z)-decenoyl-[ACP]. It participates in lipid metabolism; fatty acid biosynthesis. Its function is as follows. Necessary for the introduction of cis unsaturation into fatty acids. Catalyzes the dehydration of (3R)-3-hydroxydecanoyl-ACP to E-(2)-decenoyl-ACP and then its isomerization to Z-(3)-decenoyl-ACP. Can catalyze the dehydratase reaction for beta-hydroxyacyl-ACPs with saturated chain lengths up to 16:0, being most active on intermediate chain length. The protein is 3-hydroxydecanoyl-[acyl-carrier-protein] dehydratase of Histophilus somni (strain 129Pt) (Haemophilus somnus).